The sequence spans 525 residues: MSELLNRRLSLLGANLPLLKQCLHGIERECLRVTDEGRLAQTPHPEALGSALTNEQITTDYSESLLEFITPALADPAKVLESLEETHRFVYSKLGDEYLWSPSMPCTLPAEEDIPIAEYGSSNIGKLKHVYRKGLALRYGRTMQCIAGIHYNFSLPEALWPLLREAEGSTENDRDYQSSAYIALIRNFRRYSWLLMYLFGASPALDKGFLRGRPHQLEELDAETLFLPYATSLRMSDLGYQSNAQAGLTPCYNNLASYTDSLRKAVGTPYPPYVEIGTHVDGEWVQLNTNILQIENEYYSNIRPKRVTYTGERPIQALTSRGVQYVEVRCLDINPFLPVGIDLTEARFLDAFLLFCALEDSPQLDNGECGQCTSNFLTVVKEGRRPGLELHRNGQPISLKDWASELIGRIRQLANLLDQAQGSDEHAKALDAQQAKVDDTSLTPSAQVLARMTEHDESFVQFSLRQSRVHAETFREQPLSNEKQQAFETLARESLARQSELEQNEVGDFDLFVGAYQASILAISS.

The protein belongs to the glutamate--cysteine ligase type 1 family. Type 1 subfamily.

It catalyses the reaction L-cysteine + L-glutamate + ATP = gamma-L-glutamyl-L-cysteine + ADP + phosphate + H(+). It participates in sulfur metabolism; glutathione biosynthesis; glutathione from L-cysteine and L-glutamate: step 1/2. The sequence is that of Glutamate--cysteine ligase from Pseudomonas putida (strain ATCC 47054 / DSM 6125 / CFBP 8728 / NCIMB 11950 / KT2440).